The following is a 256-amino-acid chain: Protein RKD4 (256 aa).

An RWP-RK domain is found at 130–216 (EKVTVKKKRN…MEEEVKNLEE (87 aa)). The stretch at 190–224 (RKLKSLNSLIKNLKNVGMEEEVKNLEEHRFLIEQE) forms a coiled coil.

The protein resides in the nucleus. Putative transcription factor. The polypeptide is Protein RKD4 (RKD4) (Arabidopsis thaliana (Mouse-ear cress)).